Reading from the N-terminus, the 568-residue chain is Putative F-box protein At5g39480 (568 aa).

Residues 9-55 (ACLLLTLPEDVFAVISRFLSPSDICNLILCGKSLPALVDTEKMWLVQ) form the F-box domain. The segment at 315-337 (TNVLGESSSSKNTTPSQSEIRVS) is disordered. Positions 321-332 (SSSSKNTTPSQS) are enriched in low complexity.

The protein is Putative F-box protein At5g39480 of Arabidopsis thaliana (Mouse-ear cress).